A 307-amino-acid chain; its full sequence is Ornithine carbamoyltransferase (307 aa).

Carbamoyl phosphate is bound by residues serine 51–threonine 54, glutamine 78, arginine 102, and histidine 129–glutamine 132. Residues asparagine 160, aspartate 220, and serine 224–methionine 225 each bind L-ornithine. Residues cysteine 260 to leucine 261 and arginine 288 each bind carbamoyl phosphate.

The protein belongs to the aspartate/ornithine carbamoyltransferase superfamily. OTCase family.

The protein resides in the cytoplasm. The catalysed reaction is carbamoyl phosphate + L-ornithine = L-citrulline + phosphate + H(+). It functions in the pathway amino-acid biosynthesis; L-arginine biosynthesis; L-arginine from L-ornithine and carbamoyl phosphate: step 1/3. In terms of biological role, reversibly catalyzes the transfer of the carbamoyl group from carbamoyl phosphate (CP) to the N(epsilon) atom of ornithine (ORN) to produce L-citrulline. This chain is Ornithine carbamoyltransferase (argF), found in Archaeoglobus fulgidus (strain ATCC 49558 / DSM 4304 / JCM 9628 / NBRC 100126 / VC-16).